The chain runs to 70 residues: DNA-directed RNA polymerase subunit omega (70 aa).

The protein belongs to the RNA polymerase subunit omega family. As to quaternary structure, the RNAP catalytic core consists of 2 alpha, 1 beta, 1 beta' and 1 omega subunit. When a sigma factor is associated with the core the holoenzyme is formed, which can initiate transcription.

It catalyses the reaction RNA(n) + a ribonucleoside 5'-triphosphate = RNA(n+1) + diphosphate. In terms of biological role, promotes RNA polymerase assembly. Latches the N- and C-terminal regions of the beta' subunit thereby facilitating its interaction with the beta and alpha subunits. This chain is DNA-directed RNA polymerase subunit omega, found in Methylobacillus flagellatus (strain ATCC 51484 / DSM 6875 / VKM B-1610 / KT).